The primary structure comprises 427 residues: Trigger factor (427 aa).

Positions 163–248 constitute a PPIase FKBP-type domain; the sequence is GDTVVIDFVG…IHEVKTKEVP (86 aa).

The protein belongs to the FKBP-type PPIase family. Tig subfamily.

It localises to the cytoplasm. The enzyme catalyses [protein]-peptidylproline (omega=180) = [protein]-peptidylproline (omega=0). Functionally, involved in protein export. Acts as a chaperone by maintaining the newly synthesized protein in an open conformation. Functions as a peptidyl-prolyl cis-trans isomerase. The protein is Trigger factor of Streptococcus pyogenes serotype M49 (strain NZ131).